We begin with the raw amino-acid sequence, 586 residues long: Glutathione hydrolase 5 proenzyme (586 aa).

Over 1 to 8 the chain is Cytoplasmic; that stretch reads MARGYGAT. Residues 9–29 traverse the membrane as a helical; Signal-anchor for type II membrane protein segment; sequence VSLVLLGLGLALAVIVLAVVL. The Extracellular segment spans residues 30-586; the sequence is SRHQAPCGPQ…LRKSGEAAGY (557 aa). Asn-98 carries N-linked (GlcNAc...) asparagine glycosylation. Arg-110 contacts L-glutamate. N-linked (GlcNAc...) asparagine glycosylation is found at Asn-204, Asn-303, and Asn-347. The active-site Nucleophile is Thr-388. L-glutamate-binding positions include Thr-406, Glu-427, and 469–470; that span reads SS. 2 N-linked (GlcNAc...) asparagine glycosylation sites follow: Asn-535 and Asn-550.

The protein belongs to the gamma-glutamyltransferase family. Heterodimer composed of the light and heavy chains. The active site is located in the light chain. Cleaved by autocatalysis into a large and a small subunit. In terms of processing, glycosylated. As to expression, expressed in follicular dendritic cells in lymphoid follicles (at protein level).

The protein localises to the membrane. The enzyme catalyses glutathione + H2O = L-cysteinylglycine + L-glutamate. It catalyses the reaction an S-substituted glutathione + H2O = an S-substituted L-cysteinylglycine + L-glutamate. The catalysed reaction is leukotriene C4 + H2O = leukotriene D4 + L-glutamate. It carries out the reaction S-[(2E,6E,10E)-geranylgeranyl]-L-glutathione + H2O = S-[(2E,6E,10E)-geranylgeranyl]-L-cysteinylglycine + L-glutamate. The enzyme catalyses an N-terminal (5-L-glutamyl)-[peptide] + an alpha-amino acid = 5-L-glutamyl amino acid + an N-terminal L-alpha-aminoacyl-[peptide]. It participates in sulfur metabolism; glutathione metabolism. It functions in the pathway lipid metabolism; leukotriene D4 biosynthesis. Inhibited by serine-borate. In terms of biological role, cleaves the gamma-glutamyl bond of extracellular glutathione tripeptide (gamma-Glu-Cys-Gly) and certain glutathione conjugates. Hydrolyzes glutathione releasing L-Glu and Cys-Gly dipeptide which is further metabolized to maintain extracellular cysteine levels but also to provide cysteine necessary for intracellular glutathione synthesis. Among glutathione-S-conjugates metabolizes leukotriene C4 (LTC4) and S-geranylgeranyl-glutathione (GGG), but is inactive toward gamma-glutamyl leucine. Converts extracellular LTC4 to LTD4 during acute inflammatory response. Acts as a negative regulator of GGG bioactivity. GGT5 (via GGG catabolism) and ABCC1 (via extracellular transport) establish GGG gradients within lymphoid tissues to position P2RY8-positive lymphocytes at germinal centers in lymphoid follicles and restrict their chemotactic transmigration from blood vessels to bone marrow parenchyma. The transpeptidation reaction, i.e. the transfer of gamma-glutamyl moiety to an acceptor molecule to yield a new gamma-glutamyl compound requires high concentration of dipeptide acceptor and is considered nonphysiological. The polypeptide is Glutathione hydrolase 5 proenzyme (GGT5) (Homo sapiens (Human)).